A 296-amino-acid chain; its full sequence is Nucleotide-binding protein SGO_0954 (296 aa).

An ATP-binding site is contributed by 13-20 (GMSGAGKT). 63–66 (DMRS) serves as a coordination point for GTP.

This sequence belongs to the RapZ-like family.

Functionally, displays ATPase and GTPase activities. This Streptococcus gordonii (strain Challis / ATCC 35105 / BCRC 15272 / CH1 / DL1 / V288) protein is Nucleotide-binding protein SGO_0954.